Here is a 603-residue protein sequence, read N- to C-terminus: DNA-directed RNA polymerase subunit beta' N-terminal section (603 aa).

Residues Cys283, Cys285, Cys329, and Cys332 each contribute to the Zn(2+) site.

It belongs to the RNA polymerase beta' chain family. RpoC1 subfamily. In plastids the minimal PEP RNA polymerase catalytic core is composed of four subunits: alpha, beta, beta', and beta''. When a (nuclear-encoded) sigma factor is associated with the core the holoenzyme is formed, which can initiate transcription. It depends on Zn(2+) as a cofactor.

It localises to the plastid. The protein resides in the chloroplast. It carries out the reaction RNA(n) + a ribonucleoside 5'-triphosphate = RNA(n+1) + diphosphate. DNA-dependent RNA polymerase catalyzes the transcription of DNA into RNA using the four ribonucleoside triphosphates as substrates. In Chlamydomonas reinhardtii (Chlamydomonas smithii), this protein is DNA-directed RNA polymerase subunit beta' N-terminal section (rpoC1A).